We begin with the raw amino-acid sequence, 278 residues long: Bis(5'-nucleosyl)-tetraphosphatase, symmetrical (278 aa).

This sequence belongs to the Ap4A hydrolase family.

It carries out the reaction P(1),P(4)-bis(5'-adenosyl) tetraphosphate + H2O = 2 ADP + 2 H(+). Functionally, hydrolyzes diadenosine 5',5'''-P1,P4-tetraphosphate to yield ADP. This Buchnera aphidicola subsp. Baizongia pistaciae (strain Bp) protein is Bis(5'-nucleosyl)-tetraphosphatase, symmetrical.